Here is a 153-residue protein sequence, read N- to C-terminus: Deoxyuridine 5'-triphosphate nucleotidohydrolase (153 aa).

Substrate-binding positions include 71-73 (RSG), N84, 88-90 (TID), and K98.

The protein belongs to the dUTPase family. Requires Mg(2+) as cofactor.

The enzyme catalyses dUTP + H2O = dUMP + diphosphate + H(+). The protein operates within pyrimidine metabolism; dUMP biosynthesis; dUMP from dCTP (dUTP route): step 2/2. In terms of biological role, this enzyme is involved in nucleotide metabolism: it produces dUMP, the immediate precursor of thymidine nucleotides and it decreases the intracellular concentration of dUTP so that uracil cannot be incorporated into DNA. The sequence is that of Deoxyuridine 5'-triphosphate nucleotidohydrolase from Wolbachia pipientis subsp. Culex pipiens (strain wPip).